The sequence spans 36 residues: Zinc metalloproteinase-disintegrin-like VaH1 (36 aa).

The 36-residue stretch at 1-36 (MVTKYSSIFMSPILSNPPILYFSDCSREXYQKXLTN) folds into the Peptidase M12B domain.

Belongs to the venom metalloproteinase (M12B) family. P-III subfamily. P-IIIa sub-subfamily. As to quaternary structure, monomer. Zn(2+) serves as cofactor. Post-translationally, the N-terminus is blocked. Glycosylated. In terms of tissue distribution, expressed by the venom gland.

Its subcellular location is the secreted. Its activity is regulated as follows. Inhibited by EDTA, but not inhibited by iodoacetamide, PMSF and pepstatin A. Functionally, snake venom zinc metalloprotease that exhibits strong hemorrhagic activity. It also degrades alpha-chain of fibrinogen (FGA), but not the beta- and the gamma-chains. Possesses potent azocaseinolytic activity and cleaves insulin B-chain, hydrolyzing it at positions Ala(14)-Leu(15), followed by Tyr(16)-Leu(17) and His(10)-Leu(11). In vivo, subcutaneous injection into mice induces strong hemorrhage. In Vipera ammodytes ammodytes (Western sand viper), this protein is Zinc metalloproteinase-disintegrin-like VaH1.